Here is a 272-residue protein sequence, read N- to C-terminus: MLFNLVLQSYSQIEKLYDKEATEIKDNCQNHIYIMSTNKDTIEEISHRAGHKTVIGKSSNESHLETDNKITKNADQQRIISPERLAQFIEGETLLLRALHRQDLKRKKVRAYPILNTRETSMPYRWQFLGKDFDTSKDLNEIDIPSLHTGLDLTDLYLNFLDFIVNPVAKKEYIKKQQSNPVVKTEPIDINEIIKALIGLVKEKRNRNNSEDIQKRLVQMLLDYATDTIFPKTEEVEFLIEHSSDNEMKRHLEKLLDMLKKIDLKLGGKVEK.

This is an uncharacterized protein from Bacillus anthracis.